A 92-amino-acid chain; its full sequence is YcgL domain-containing protein PBPRA1080 (92 aa).

The YcgL domain maps to 1 to 84; it reads MLCSIYKSSK…PVTNLLHQYK (84 aa).

This Photobacterium profundum (strain SS9) protein is YcgL domain-containing protein PBPRA1080.